We begin with the raw amino-acid sequence, 159 residues long: Serine-protein kinase RsbW (159 aa).

Belongs to the anti-sigma-factor family.

It carries out the reaction L-seryl-[protein] + ATP = O-phospho-L-seryl-[protein] + ADP + H(+). It catalyses the reaction L-threonyl-[protein] + ATP = O-phospho-L-threonyl-[protein] + ADP + H(+). Negative regulator of sigma-B activity. Phosphorylates and inactivates its specific antagonist protein, RsbV. Upon phosphorylation of RsbV, RsbW is released and binds to sigma-B, thereby blocking its ability to form an RNA polymerase holoenzyme (E-sigma-B). The chain is Serine-protein kinase RsbW from Staphylococcus aureus (strain MSSA476).